A 500-amino-acid chain; its full sequence is FAD-linked oxidoreductase easE (500 aa).

One can recognise an FAD-binding PCMH-type domain in the interval 37–220 (QGRIPLFTVG…TRATMRVFPD (184 aa)).

The protein belongs to the oxygen-dependent FAD-linked oxidoreductase family. It depends on FAD as a cofactor.

It participates in alkaloid biosynthesis; ergot alkaloid biosynthesis. Functionally, FAD-linked oxidoreductase; part of the gene cluster that mediates the biosynthesis of fungal ergot alkaloid. DmaW catalyzes the first step of ergot alkaloid biosynthesis by condensing dimethylallyl diphosphate (DMAP) and tryptophan to form 4-dimethylallyl-L-tryptophan. The second step is catalyzed by the methyltransferase easF that methylates 4-dimethylallyl-L-tryptophan in the presence of S-adenosyl-L-methionine, resulting in the formation of 4-dimethylallyl-L-abrine. The catalase easC and the FAD-dependent oxidoreductase easE then transform 4-dimethylallyl-L-abrine to chanoclavine-I which is further oxidized by easD in the presence of NAD(+), resulting in the formation of chanoclavine-I aldehyde. Chanoclavine-I aldehyde is the precursor of ergoamides and ergopeptines in Clavicipitaceae, and clavine-type alcaloids such as fumiclavine in Trichocomaceae. However, the metabolites downstream of chanoclavine-I aldehyde in Arthrodermataceae have not been identified yet. This Arthroderma benhamiae (strain ATCC MYA-4681 / CBS 112371) (Trichophyton mentagrophytes) protein is FAD-linked oxidoreductase easE.